A 367-amino-acid polypeptide reads, in one-letter code: Farnesyl pyrophosphate synthase (367 aa).

Residues lysine 71, arginine 74, and glutamine 110 each contribute to the isopentenyl diphosphate site. Mg(2+) is bound by residues aspartate 117 and aspartate 121. Arginine 126 is a binding site for dimethylallyl diphosphate. Arginine 127 provides a ligand contact to isopentenyl diphosphate. Dimethylallyl diphosphate-binding residues include lysine 214, threonine 215, glutamine 254, lysine 271, and lysine 280.

Belongs to the FPP/GGPP synthase family. Homodimer. Mg(2+) serves as cofactor.

The protein localises to the cytoplasm. It carries out the reaction isopentenyl diphosphate + dimethylallyl diphosphate = (2E)-geranyl diphosphate + diphosphate. The catalysed reaction is isopentenyl diphosphate + (2E)-geranyl diphosphate = (2E,6E)-farnesyl diphosphate + diphosphate. The protein operates within isoprenoid biosynthesis; farnesyl diphosphate biosynthesis; farnesyl diphosphate from geranyl diphosphate and isopentenyl diphosphate: step 1/1. Its pathway is isoprenoid biosynthesis; geranyl diphosphate biosynthesis; geranyl diphosphate from dimethylallyl diphosphate and isopentenyl diphosphate: step 1/1. Functionally, catalyzes the sequential condensation of isopentenyl pyrophosphate with the allylic pyrophosphates, dimethylallyl pyrophosphate, and then with the resultant geranylpyrophosphate to the ultimate product farnesyl pyrophosphate. The chain is Farnesyl pyrophosphate synthase (FDPS) from Gallus gallus (Chicken).